A 150-amino-acid chain; its full sequence is Large ribosomal subunit protein bL17 (150 aa).

The interval 126-150 (DRAKRREERLKAQREGRDHEEETDE) is disordered.

Belongs to the bacterial ribosomal protein bL17 family. As to quaternary structure, part of the 50S ribosomal subunit. Contacts protein L32.

This chain is Large ribosomal subunit protein bL17, found in Solibacter usitatus (strain Ellin6076).